A 266-amino-acid polypeptide reads, in one-letter code: Large ribosomal subunit protein uL2m (266 aa).

This sequence belongs to the universal ribosomal protein uL2 family.

It localises to the mitochondrion. The protein is Large ribosomal subunit protein uL2m (mrpl2) of Dictyostelium discoideum (Social amoeba).